A 1218-amino-acid polypeptide reads, in one-letter code: MGESQSKQESNTRVAQHGSQQDVDPTFQTKRALERERSSPQVEQSFLGQLQSLLGWSSTSKDVPLSQLIREMDHESRRHSHQSKKKLDRSEHISEGTIPEIYEKRKETISHTQSMEQKYLFQNFTKLLLLQKCCPGGSEKLVRESWHPCVPEEGGHMIEIQDLFDPNLDTEKKPQLVIIEGAAGIGKSTLARQVKRAWDEGQLYRDRFQHVFFFSCRELAQCKQLSLAELIAQGQEVPTAPTRQILSRPEKLLFILDGIDEPAWVLEDQNPELCVHWSQAQPVHTLLGSLLGKSILPEASLMLTARTTALQKLVPSLGQPHRVEVLGFSEFERKDYFYKYFAKERNTIIDFNLIGSIPVLLTLCEVPWVCWLLCTCLEKQMQQGEVLSLTSQTTTALCLKYLSLTIPGQHLSTQLRTLCSLAAEGICQRRTLFSKSDLCKQGLAEDAIATFLKIGVLQRQPSSLSYSFAHLCLQEFFAAMSYILEDSEEAHGDMGNDRTVETLVERYGRQNLFEAPTVRFLLGLLNTREMREMENIFACKFPWETKLKLLRSIIGEPFCQPCHLGLFHCLYENQEEELLTETMLCFPLTASGPNHMEATVFQTNVKRLVIQTDMELMVVTFCITFSHVRSLRLKGKGQQEYKLTAPAMVLYRWTPISEASWKVLFSNLKCTRNLEELDLSGNPLSYSAVRSLCTALRQPGCRLKTLWLVDCGLTSRCCSFLASMLSAHSRLAELDLRLNDLGDNGVRQLCEGLRNPACNLSILRLDQASLSEQVITELRALETKNPKLFISSTWMSHMTMPTENTDGEESLTSSKQQQQQSGDKHMEPLGTDDDFWGPSGPVSTEVVDRERNLYRVRLPMAGSYHCPSTGLHFVVTRAVTIEIGFCAWSQFLHETPLQHSHMVAGPLFDIKAEHGAVTAVCLPHFVSLQEGKVDSSLFHVAHFQDHGMVLETPARVEPHFAVLENPSFSPMGVLLRMIPAVGHFIPITSITLIYYRLYLEDITFHLYLVPNDCTIRKAIDEEELKFQFVRINKPPPVDALYVGSRYIVSSSKEVEILPKELELCYRSPRESQLFSEIYVGNIGSGINLQLTDKKYMNLIWEALLKPGDLRPALPRMASAPKDAPALLHFVDQHREQLVARVTSVDPLLDKLHGLVLSEEDYETVRAEATNQDKMRKLFRGSRSWSWDCKDHFYQALKETHPHLIMDLLEKSGGVSVRL.

Positions Met1–Thr29 are enriched in polar residues. Disordered stretches follow at residues Met1–Gln44 and Glu71–Glu91. The span at Arg77–Leu87 shows a compositional bias: basic residues. The NACHT domain maps to Gln175–Leu484. Gly181–Ser188 is a binding site for ATP. LRR repeat units follow at residues Lys343–Cys364, Asn673–Cys693, and Arg730–Cys750. Polar residues predominate over residues Thr799–Lys815. The interval Thr799–Val842 is disordered. The segment at Phe835–Phe968 is ZU5. One can recognise an FIIND domain in the interval Phe835–Ser1118. Residues Ser969–Ser1118 are UPA. Positions Asp1122–Ser1211 constitute a CARD domain.

It belongs to the NLRP family. In terms of assembly, interacts (via LRR repeats) with BCL2 and BCL2L1 (via the loop between motifs BH4 and BH3). Interacts with NOD2; this interaction is enhanced in the presence of muramyl dipeptide (MDP) and increases IL1B release. Interacts with EIF2AK2/PKR; this interaction requires EIF2AK2 activity, is accompanied by EIF2AK2 autophosphorylation and promotes inflammasome assembly in response to danger-associated signals. Interacts with MEFV; this interaction targets Nlrp1a to degradation by autophagy, hence preventing excessive IL1B- and IL18-mediated inflammation. Interacts with DPP9; leading to inhibit activation of the inflammasome. DPP9 acts via formation of a ternary complex, composed of a DPP9 homodimer, one full-length NLRP1 protein, and one cleaved C-terminus of Nlrp1a (NACHT, LRR and PYD domains-containing protein 1a, C-terminus). Interacts with DPP8; leading to inhibit activation of the inflammasome, probably via formation of a ternary complex with DPP8. Interacts with the C-terminal part of Nlrp1a (NACHT, LRR and PYD domains-containing protein 1a, C-terminus) in absence of pathogens and other damage-associated signals. As to quaternary structure, interacts with the N-terminal part of Nlrp1a (NACHT, LRR and PYD domains-containing protein 1a, N-terminus) in absence of pathogens and other damage-associated signals. Homomultimer; forms the Nlrp1a inflammasome polymeric complex, a filament composed of homopolymers of this form in response to pathogens and other damage-associated signals. The Nlrp1a inflammasome polymeric complex directly recruits pro-caspase-1 (proCASP1) independently of PYCARD/ASC. Interacts (via CARD domain) with CASP1 (via CARD domain); leading to CASP1 activation. In terms of processing, autocatalytically cleaved. Autocatalytic cleavage in FIIND region occurs constitutively, prior to activation signals, and is required for inflammasome activity (IL1B release), possibly by facilitating CASP1 binding. Both N- and C-terminal parts remain associated non-covalently. Post-translationally, ubiquitinated in response to pathogen-associated signals, leading to its degradation by the proteasome and subsequent release of the cleaved C-terminal part of the protein (NACHT, LRR and PYD domains-containing protein 1a, C-terminus), which polymerizes and forms the Nlrp1a inflammasome.

It is found in the cytoplasm. Its subcellular location is the cytosol. The protein localises to the nucleus. It localises to the inflammasome. Activated by pathogens and other damage-associated signals: activation promotes ubiquitination and degradation of the N-terminal part, releasing the cleaved C-terminal part of the protein (NACHT, LRR and PYD domains-containing protein 1a, C-terminus), which polymerizes and forms the Nlrp1a inflammasome. Nlrp1a inflammasome is inhibited by DPP8 and DPP9, which sequester the C-terminal fragment of Nlrp1a (NACHT, LRR and PYD domains-containing protein 1a, C-terminus) in a ternary complex, thereby preventing Nlrp1a oligomerization and activation. Nlrp1a inflammasome is strongly activated by Val-boroPro (Talabostat, PT-100), an inhibitor of dipeptidyl peptidases DPP8 and DPP9. Val-boroPro relieves inhibition of DPP8 and/or DPP9 by promoting disruption of the ternary complex, releasing its C-terminal part from autoinhibition. Not activated by cleavage by B.anthracis lethal toxin (LT) endopeptidase. In terms of biological role, acts as the sensor component of the Nlrp1a inflammasome, which mediates inflammasome activation in response to various pathogen-associated signals, leading to subsequent pyroptosis. Inflammasomes are supramolecular complexes that assemble in the cytosol in response to pathogens and other damage-associated signals and play critical roles in innate immunity and inflammation. Acts as a recognition receptor (PRR): recognizes specific pathogens and other damage-associated signals, such as Val-boroPro inhibitor, and mediates the formation of the inflammasome polymeric complex. In response to pathogen-associated signals, the N-terminal part of Nlrp1a is degraded by the proteasome, releasing the cleaved C-terminal part of the protein (NACHT, LRR and PYD domains-containing protein 1a, C-terminus), which polymerizes to initiate the formation of the inflammasome complex: the inflammasome directly recruits pro-caspase-1 (proCASP1) independently of PYCARD/ASC and promotes caspase-1 (CASP1) activation, which subsequently cleaves and activates inflammatory cytokines IL1B and IL18 and gasdermin-D (GSDMD), leading to pyroptosis. In the absence of GSDMD expression, the Nlrp1a inflammasome is able to recruit and activate CASP8, leading to activation of gasdermin-E (GSDME). Its function is as follows. Constitutes the precursor of the Nlrp1a inflammasome, which mediates autoproteolytic processing within the FIIND domain to generate the N-terminal and C-terminal parts, which are associated non-covalently in absence of pathogens and other damage-associated signals. Functionally, regulatory part that prevents formation of the Nlrp1a inflammasome: in absence of pathogens and other damage-associated signals, interacts with the C-terminal part of Nlrp1a (NACHT, LRR and PYD domains-containing protein 1a, C-terminus), preventing activation of the Nlrp1a inflammasome. In response to pathogen-associated signals, this part is ubiquitinated by the N-end rule pathway and degraded by the proteasome, releasing the cleaved C-terminal part of the protein, which polymerizes and forms the Nlrp1a inflammasome. Constitutes the active part of the Nlrp1a inflammasome. In absence of pathogens and other damage-associated signals, interacts with the N-terminal part of Nlrp1a (NACHT, LRR and PYD domains-containing protein 1a, N-terminus), preventing activation of the Nlrp1a inflammasome. In response to pathogen-associated signals, the N-terminal part of Nlrp1a is degraded by the proteasome, releasing this form, which polymerizes to form the Nlrp1a inflammasome complex: the Nlrp1a inflammasome complex then directly recruits pro-caspase-1 (proCASP1) and promotes caspase-1 (CASP1) activation, leading to gasdermin-D (GSDMD) cleavage and subsequent pyroptosis. The sequence is that of NACHT, LRR and PYD domains-containing protein 1a allele 4 from Rattus norvegicus (Rat).